Consider the following 226-residue polypeptide: PKHD-type hydroxylase Nwi_0701 (226 aa).

In terms of domain architecture, Fe2OG dioxygenase spans 78–178 (KVLPPRFNRY…RLAAFFWTQS (101 aa)). Fe cation is bound by residues His96, Asp98, and His159. Arg169 serves as a coordination point for 2-oxoglutarate.

Requires Fe(2+) as cofactor. L-ascorbate serves as cofactor.

The polypeptide is PKHD-type hydroxylase Nwi_0701 (Nitrobacter winogradskyi (strain ATCC 25391 / DSM 10237 / CIP 104748 / NCIMB 11846 / Nb-255)).